A 492-amino-acid polypeptide reads, in one-letter code: MKIQAIETVAADWSGDYLGIGFFEDSAAIDAGLTQLDQSLQDILQDLVSETEFQGKVGEQPWTRIAGPGSIRKVMLIGLGSPDAFTLDSLRQAAAAFAKAAQKQKAASAGLQLPSWDDDAAASTQAMAEGIELALHQEIRFKSDPDAKKPGEFPQEVHLLGLANQAAAIEKAQQICAGVILTRELVAAPANVVTPSALAETAAQIAEDHGLTLEVLEREECEAQGMGAFLGVSLASELPPKFIHLTYKPSGTPRRKLAIVGKGVTFDSGGLNLKVGGSGIETMKMDMAGSGATLGAAKAIGQLKPDVEVHFIVAAAENMISGHALHPGDILTASNGKTIEINNTDAEGRLTLADALVFAEKQGVDAIVDLATLTGACIVALGNDIAGMWTPEDSLAEELSQASEQAGEKFWRMPLEEKYFEGLKSPIADMKNTGPRPGGSITAALFLKQYIENTPWAHLDVAGPVWTEKENGYLNVGATGFAVRTLVNWVMG.

Positions 262 and 267 each coordinate Mn(2+). The active site involves Lys-274. Mn(2+) contacts are provided by Asp-286, Asp-345, and Glu-347. Arg-349 is an active-site residue.

This sequence belongs to the peptidase M17 family. Requires Mn(2+) as cofactor.

The protein resides in the cytoplasm. The enzyme catalyses Release of an N-terminal amino acid, Xaa-|-Yaa-, in which Xaa is preferably Leu, but may be other amino acids including Pro although not Arg or Lys, and Yaa may be Pro. Amino acid amides and methyl esters are also readily hydrolyzed, but rates on arylamides are exceedingly low.. The catalysed reaction is Release of an N-terminal amino acid, preferentially leucine, but not glutamic or aspartic acids.. Presumably involved in the processing and regular turnover of intracellular proteins. Catalyzes the removal of unsubstituted N-terminal amino acids from various peptides. In Acaryochloris marina (strain MBIC 11017), this protein is Probable cytosol aminopeptidase.